The sequence spans 1597 residues: Glucosyltransferase-I (1597 aa).

Positions 1–38 (MEKNERFKMHKVKKRWVTISVASATMLASALGASVASA) are cleaved as a signal peptide. Residues 52–120 (LTADQTTTNQ…QTTTNANEAK (69 aa)) form a disordered region. Positions 53-114 (TADQTTTNQD…STDTAAQTTT (62 aa)) are enriched in low complexity. Cell wall-binding repeat units lie at residues 157–176 (MSNVKQVDGKYYYYDQDGNV) and 178–197 (KNFAVSVGEKIYYFDETGAY). The segment at 200–1050 (TSKVEADKSG…DQASNKYLNV (851 aa)) is catalytic; approximate. Cell wall-binding repeat units follow at residues 1089–1108 (TDSFITEAGNLYYFGQDGYM), 1109–1128 (VTGAQNIKGSNYYFLANGAA), 1130–1150 (RNTVYTDAQGQNHYYGNDGKR), 1152–1172 (ENGYQQFGNDSWRYFKNGVMA), 1173–1191 (LGLTTVDGHVQYFDKDGVQ), 1193–1214 (KDKIIVTRDGKVRYFDQHNGNA), 1216–1236 (TNTFVADKTGHWYYLGKDGVA), 1237–1256 (VTGAQTVGKQHLYFEANGQQ), 1258–1279 (KGDFVTAKDGKLYFYDVDSGDM), 1281–1301 (TNTFIEDKAGNWFYLGKDGAA), 1302–1321 (VTGAQTIKGQKLYFKANGQQ), 1323–1343 (KGDIVKDADGKIRYYDAQTGE), 1344–1365 (QVFNKSVSVNGKTYYFGSDGTA), 1366–1380 (QTQANPKGQTFKDGS), 1415–1434 (LTGAQTIGNQRVYFKDNGHQ), 1436–1457 (KGQLVTGNDGKLRYYDANSGDQ), 1459–1478 (FNKSVTVNGKTYYFGSDGTA), 1485–1505 (KGQTFKDGSGVLRFYNLEGQY), 1508–1527 (GSGWYKNAQGQWLYVKDGKV), 1528–1547 (LTGLQTVGNQKVYFDKNGIQ), 1549–1570 (KGKAVRTSDGKVRYFDENSGSM), and 1572–1591 (TNQWKFVYGQYYYFGSDGAA). The segment at 1099-1597 (LYYFGQDGYM…DGAAVYRGWN (499 aa)) is glucan-binding; approximate.

Belongs to the glycosyl hydrolase 70 family.

The protein resides in the secreted. It carries out the reaction [(1-&gt;6)-alpha-D-glucosyl](n) + sucrose = [(1-&gt;6)-alpha-D-glucosyl](n+1) + D-fructose. In terms of biological role, production of extracellular glucans, that are thought to play a key role in the development of the dental plaque because of their ability to adhere to smooth surfaces and mediate the aggregation of bacterial cells and food debris. In Streptococcus downei (Streptococcus sobrinus), this protein is Glucosyltransferase-I (gtfI).